Reading from the N-terminus, the 207-residue chain is MPKVTVYNQTGSQVGEIELAEAIFGIEPNEAVLFEAVMMQRASLRQGTHKVKTRSEVRGGGRKPWRQKGTGRARQGSIRSPQWRGGGTVFGPTPRSYAYKLPKKVRRLAIKSALATKVVENNIVVLEDLVLNAPKTKDMLAVLKGLTVEKKALIVTADANESVELSARNIPGVTVITADGVNVLDVLHHDKLIMTKAAVEKVEEVLA.

Residues 45-89 are disordered; the sequence is RQGTHKVKTRSEVRGGGRKPWRQKGTGRARQGSIRSPQWRGGGTV. Positions 60–71 are enriched in basic residues; sequence GGRKPWRQKGTG.

The protein belongs to the universal ribosomal protein uL4 family. In terms of assembly, part of the 50S ribosomal subunit.

One of the primary rRNA binding proteins, this protein initially binds near the 5'-end of the 23S rRNA. It is important during the early stages of 50S assembly. It makes multiple contacts with different domains of the 23S rRNA in the assembled 50S subunit and ribosome. Its function is as follows. Forms part of the polypeptide exit tunnel. The chain is Large ribosomal subunit protein uL4 from Bacillus anthracis (strain A0248).